Reading from the N-terminus, the 127-residue chain is Riboflavin kinase (127 aa).

10 to 15 contacts CDP; sequence GLGEGR. Thr39 and Asn41 together coordinate Mg(2+). FMN is bound by residues Thr96 and Glu104. 109-112 is a binding site for CDP; sequence IQLR.

It belongs to the archaeal riboflavin kinase family. The cofactor is Mg(2+).

It carries out the reaction riboflavin + CTP = CDP + FMN + H(+). Its pathway is cofactor biosynthesis; FMN biosynthesis; FMN from riboflavin (CTP route): step 1/1. Catalyzes the CTP-dependent phosphorylation of riboflavin (vitamin B2) to form flavin mononucleotide (FMN). This is Riboflavin kinase from Methanococcus maripaludis (strain C5 / ATCC BAA-1333).